Here is a 234-residue protein sequence, read N- to C-terminus: 2-C-methyl-D-erythritol 4-phosphate cytidylyltransferase (234 aa).

The protein belongs to the IspD/TarI cytidylyltransferase family. IspD subfamily.

The catalysed reaction is 2-C-methyl-D-erythritol 4-phosphate + CTP + H(+) = 4-CDP-2-C-methyl-D-erythritol + diphosphate. It participates in isoprenoid biosynthesis; isopentenyl diphosphate biosynthesis via DXP pathway; isopentenyl diphosphate from 1-deoxy-D-xylulose 5-phosphate: step 2/6. Functionally, catalyzes the formation of 4-diphosphocytidyl-2-C-methyl-D-erythritol from CTP and 2-C-methyl-D-erythritol 4-phosphate (MEP). This is 2-C-methyl-D-erythritol 4-phosphate cytidylyltransferase from Shewanella sediminis (strain HAW-EB3).